Consider the following 573-residue polypeptide: Proline--tRNA ligase (573 aa).

Belongs to the class-II aminoacyl-tRNA synthetase family. ProS type 1 subfamily. Homodimer.

The protein resides in the cytoplasm. It catalyses the reaction tRNA(Pro) + L-proline + ATP = L-prolyl-tRNA(Pro) + AMP + diphosphate. Functionally, catalyzes the attachment of proline to tRNA(Pro) in a two-step reaction: proline is first activated by ATP to form Pro-AMP and then transferred to the acceptor end of tRNA(Pro). As ProRS can inadvertently accommodate and process non-cognate amino acids such as alanine and cysteine, to avoid such errors it has two additional distinct editing activities against alanine. One activity is designated as 'pretransfer' editing and involves the tRNA(Pro)-independent hydrolysis of activated Ala-AMP. The other activity is designated 'posttransfer' editing and involves deacylation of mischarged Ala-tRNA(Pro). The misacylated Cys-tRNA(Pro) is not edited by ProRS. The sequence is that of Proline--tRNA ligase from Caldanaerobacter subterraneus subsp. tengcongensis (strain DSM 15242 / JCM 11007 / NBRC 100824 / MB4) (Thermoanaerobacter tengcongensis).